A 307-amino-acid chain; its full sequence is Ribonuclease Z (307 aa).

7 residues coordinate Zn(2+): H61, H63, D65, H66, H138, D208, and H264. D65 serves as the catalytic Proton acceptor.

The protein belongs to the RNase Z family. As to quaternary structure, homodimer. Zn(2+) is required as a cofactor.

The catalysed reaction is Endonucleolytic cleavage of RNA, removing extra 3' nucleotides from tRNA precursor, generating 3' termini of tRNAs. A 3'-hydroxy group is left at the tRNA terminus and a 5'-phosphoryl group is left at the trailer molecule.. In terms of biological role, zinc phosphodiesterase, which displays some tRNA 3'-processing endonuclease activity. Probably involved in tRNA maturation, by removing a 3'-trailer from precursor tRNA. The polypeptide is Ribonuclease Z (Pyrococcus abyssi (strain GE5 / Orsay)).